A 471-amino-acid polypeptide reads, in one-letter code: ATP synthase subunit beta (471 aa).

152 to 159 lines the ATP pocket; that stretch reads GGAGVGKT.

The protein belongs to the ATPase alpha/beta chains family. F-type ATPases have 2 components, CF(1) - the catalytic core - and CF(0) - the membrane proton channel. CF(1) has five subunits: alpha(3), beta(3), gamma(1), delta(1), epsilon(1). CF(0) has three main subunits: a(1), b(2) and c(9-12). The alpha and beta chains form an alternating ring which encloses part of the gamma chain. CF(1) is attached to CF(0) by a central stalk formed by the gamma and epsilon chains, while a peripheral stalk is formed by the delta and b chains.

The protein localises to the cell membrane. The catalysed reaction is ATP + H2O + 4 H(+)(in) = ADP + phosphate + 5 H(+)(out). Functionally, produces ATP from ADP in the presence of a proton gradient across the membrane. The catalytic sites are hosted primarily by the beta subunits. The protein is ATP synthase subunit beta of Herpetosiphon aurantiacus (strain ATCC 23779 / DSM 785 / 114-95).